The chain runs to 560 residues: Phosphoglucomutase 1 (560 aa).

Alpha-D-glucose 1,6-bisphosphate is bound by residues Arg24 and Ser116. The active-site Phosphoserine intermediate is Ser116. Ser116, Asp288, Asp290, and Asp292 together coordinate Mg(2+). A Phosphoserine modification is found at Ser116. Alpha-D-glucose 1,6-bisphosphate is bound by residues Asp292, Arg293, Thr357, Glu376, Ser378, and Lys389.

Belongs to the phosphohexose mutase family. As to quaternary structure, monomer. It depends on Mg(2+) as a cofactor. In terms of tissue distribution, localized primarily to fat bodies in third instar larvae.

It carries out the reaction alpha-D-glucose 1-phosphate = alpha-D-glucose 6-phosphate. The enzyme catalyses O-phospho-L-seryl-[protein] + alpha-D-glucose 1-phosphate = alpha-D-glucose 1,6-bisphosphate + L-seryl-[protein]. The catalysed reaction is alpha-D-glucose 1,6-bisphosphate + L-seryl-[protein] = O-phospho-L-seryl-[protein] + alpha-D-glucose 6-phosphate. In terms of biological role, catalyzes the reversible isomerization of alpha-D-glucose 1-phosphate to alpha-D-glucose 6-phosphate. The mechanism proceeds via the intermediate compound alpha-D-glucose 1,6-bisphosphate. This enzyme participates in both the breakdown and synthesis of glucose. Enzyme of the glycolytic pathway. Glycolysis is essential in glial cells but not in neurons; neurons rely on the citric acid cycle for their energy needs, and on lactate and alanine secreted into the hemolymph by glial cells to fuel it. The sequence is that of Phosphoglucomutase 1 from Drosophila melanogaster (Fruit fly).